Consider the following 1150-residue polypeptide: C5a peptidase (1150 aa).

The N-terminal stretch at Met-1–Ala-31 is a signal peptide. The tract at residues Thr-33–Glu-73 is disordered. In terms of domain architecture, Peptidase S8 spans Lys-99–Ser-581. Catalysis depends on charge relay system residues Asp-130, His-193, and Ser-512. Composition is skewed to basic and acidic residues over residues Glu-1029 to Gln-1054 and Pro-1061 to Ser-1073. Residues Glu-1029–Lys-1116 form a disordered region. 3 tandem repeats follow at residues Lys-1034–Ala-1050, Lys-1051–Thr-1067, and Lys-1068–Lys-1084. The 3 X 17 AA tandem repeats stretch occupies residues Lys-1034–Lys-1084. Residues Gly-1075–Arg-1089 are compositionally biased toward polar residues. The LPXTG sorting signal motif lies at Leu-1110–Asn-1114. Position 1113 is a pentaglycyl murein peptidoglycan amidated threonine (Thr-1113). A propeptide spans Asn-1114–Lys-1150 (removed by sortase).

The protein belongs to the peptidase S8 family. Cleaved by SpeB protease; leading to its degradation. Degradation by SpeB is probably strictly regulated to preserve integrity of C5a peptidase.

It is found in the secreted. The protein localises to the cell wall. The enzyme catalyses The primary cleavage site is at 67-His-|-Lys-68 in human C5a with a minor secondary cleavage site at 58-Ala-|-Ser-59.. This virulence factor of S.pyogenes specifically cleaves the human serum chemotaxin C5a at '68-Lys-|-Asp-69' bond near its C-terminus, destroying its ability to serve as a chemoattractant. The chain is C5a peptidase (scpA) from Streptococcus pyogenes serotype M18 (strain MGAS8232).